Here is a 689-residue protein sequence, read N- to C-terminus: Elongation factor G (689 aa).

In terms of domain architecture, tr-type G spans 9-283; sequence AKFRNIGIMA…AIIEFMPSPL (275 aa). GTP is bound by residues 18-25, 82-86, and 136-139; these read AHIDAGKT, DTPGH, and NKMD.

Belongs to the TRAFAC class translation factor GTPase superfamily. Classic translation factor GTPase family. EF-G/EF-2 subfamily.

The protein localises to the cytoplasm. Catalyzes the GTP-dependent ribosomal translocation step during translation elongation. During this step, the ribosome changes from the pre-translocational (PRE) to the post-translocational (POST) state as the newly formed A-site-bound peptidyl-tRNA and P-site-bound deacylated tRNA move to the P and E sites, respectively. Catalyzes the coordinated movement of the two tRNA molecules, the mRNA and conformational changes in the ribosome. This Clostridium botulinum (strain Okra / Type B1) protein is Elongation factor G.